The following is a 289-amino-acid chain: ATP synthase gamma chain (289 aa).

This sequence belongs to the ATPase gamma chain family. In terms of assembly, F-type ATPases have 2 components, CF(1) - the catalytic core - and CF(0) - the membrane proton channel. CF(1) has five subunits: alpha(3), beta(3), gamma(1), delta(1), epsilon(1). CF(0) has three main subunits: a, b and c.

Its subcellular location is the cell inner membrane. Its function is as follows. Produces ATP from ADP in the presence of a proton gradient across the membrane. The gamma chain is believed to be important in regulating ATPase activity and the flow of protons through the CF(0) complex. This chain is ATP synthase gamma chain, found in Herminiimonas arsenicoxydans.